Consider the following 679-residue polypeptide: MGKILFEIGAEEIPARFIPLAISQIEENFKKITSEYRIELESIKVYATPRRLTLLAELSSEQASEEKLVWGPPVHVAFDEKGLPKESAYAFAKAQGIEVDQLQIKPKGKGNYVCAVLSKKGKKTEEVLPEILRNLFYSLNFPKMMRWGEGTLRFIRPVRWFLALYDDRFISFEIEGIKTENKTQGHRFLSENPLNIDRVDNYEFILEKAFVIVDPEKRKKIILTQAEELAKKVNGKILWNNELIEEVTYLVEFPNSVLCSFSMQYLKLPEELLITVMKDHQRYFAIIDNEGKLKNYFVVVSNTKAENEENIKKGAERVIKARFEDARFYYEEDLKKGLVNLLEATKGIIYHKKLGSLYDKSLRIIRIAERLSDRLIPEKTELVKIAANYCKADLASGVVGEFPELQGIMGGYYAKNAGMPEEVFLAIREHYLPKGFTDEIPSNDIGCIISLADKLDHIATFFYLGEIPSGTEDPFGLRRAANGIISILLKKKYSLSLLETVSMIQEFVDEKLKEQISIFIVQRFESYLESTGYDVNLIKTISDFILIRPVYEIKKRLEAVSLFRSKEDFEEFFLAVKRVSNIIKNYEKFELNPELFSSEEEKKLFNEIEKYKENLYEYLNSQQFFEALNYLHKLTPTINNFFDNVLVMDKDEKIKRNRLALLQHLSELLKSVADISRLY.

It belongs to the class-II aminoacyl-tRNA synthetase family. In terms of assembly, tetramer of two alpha and two beta subunits.

The protein localises to the cytoplasm. The catalysed reaction is tRNA(Gly) + glycine + ATP = glycyl-tRNA(Gly) + AMP + diphosphate. This is Glycine--tRNA ligase beta subunit from Thermodesulfovibrio yellowstonii (strain ATCC 51303 / DSM 11347 / YP87).